Reading from the N-terminus, the 580-residue chain is Arginine--tRNA ligase (580 aa).

The 'HIGH' region motif lies at 123–133; that stretch reads PNIAKEMHVGH.

The protein belongs to the class-I aminoacyl-tRNA synthetase family. Monomer.

It is found in the cytoplasm. It carries out the reaction tRNA(Arg) + L-arginine + ATP = L-arginyl-tRNA(Arg) + AMP + diphosphate. This is Arginine--tRNA ligase (argS) from Buchnera aphidicola subsp. Schizaphis graminum (strain Sg).